A 99-amino-acid chain; its full sequence is MGNKQAKAPESKDSPRASLIPDATHLGPQFCKSCWFENKGLVECNNHYLCLNCLTLLLSVSNRCPICKMPLPTKLRPSAAPTAPPTGAADSIRPPPYSP.

The N-myristoyl glycine; by host moiety is linked to residue Gly-2. The RING-type; atypical zinc finger occupies 31-67 (CKSCWFENKGLVECNNHYLCLNCLTLLLSVSNRCPIC). The interval 74–99 (KLRPSAAPTAPPTGAADSIRPPPYSP) is disordered. The segment covering 77–89 (PSAAPTAPPTGAA) has biased composition (low complexity). The PTAP/PSAP motif motif lies at 81 to 84 (PTAP). The PPXY motif signature appears at 94–97 (PPPY).

Belongs to the arenaviridae Z protein family. Interacts with protein NP; this interaction probably directs the encapsidated genome to budding sites. Interacts (via RING domain) with polymerase L; this interaction inhibits viral transcription and replication, Z partially blocks the product exit tunnel for the releasing nascent RNA product. Interacts with the glycoprotein complex; this interaction plays a role in virion budding. Interacts with host eIF4E; this interaction results in eIF4E reduced affinity for its substrate, the 5'-m7 G cap structure. Interacts (via late-budding domain) with host TSG101; this interaction is essential for budding and release of viral particles. Interacts with host RPLP0; this interaction may serve to load ribosome-like particles inside the virion. Interacts with host PML; this interaction induces PML bodies redistribution in the cytoplasm upon viral infection. Interacts with host TAX1BP1. Myristoylation is required for the role of RING finger protein Z in assembly and budding.

It is found in the virion. Its subcellular location is the host cytoplasm. It localises to the host perinuclear region. The protein resides in the host cell membrane. Functionally, plays a crucial role in virion assembly and budding. Expressed late in the virus life cycle, it acts as an inhibitor of viral transcription and RNA synthesis by interacting with the viral polymerase L. Presumably recruits the NP encapsidated genome to cellular membranes at budding sites via direct interaction with NP. Plays critical roles in the final steps of viral release by interacting with host TSG101, a member of the vacuolar protein-sorting pathway and using other cellular host proteins involved in vesicle formation pathway. The budding of the virus progeny occurs after association of protein Z with the viral glycoprotein complex SSP-GP1-GP2 at the cell periphery, step that requires myristoylation of protein Z. Also selectively represses protein production by associating with host eIF4E. In cell-based minigenome assay, has an inhibitory effect on the ribonucleoprotein machinery (vRNP), which is responsible for the replication and transcription of the viral genome. This Homo sapiens (Human) protein is RING finger protein Z.